The primary structure comprises 130 residues: Secreted RxLR effector protein 68 (130 aa).

The N-terminal stretch at 1 to 29 (MRCVCASIRRTRIIEFLMFFALSSSTASC) is a signal peptide. N-linked (GlcNAc...) asparagine glycosylation is present at N36. A RxLR motif is present at residues 45–48 (RWLR).

Belongs to the RxLR effector family.

The protein resides in the secreted. The protein localises to the host cytoplasm. It localises to the host nucleus. Its function is as follows. Effector that acts as a broad suppressor of cell death to interrupt plant immunity. Inhibits cell death induced by cell death-inducing proteins, including the PAMP elicitor INF1 from P.infestans. This Plasmopara viticola (Downy mildew of grapevine) protein is Secreted RxLR effector protein 68.